Reading from the N-terminus, the 921-residue chain is Probable dipeptidyl-aminopeptidase B (921 aa).

2 disordered regions span residues 1–33 (MAGH…TAST) and 45–66 (VAAN…RGER). Residues 1 to 109 (MAGHPEENAQ…NKSVDKKLRR (109 aa)) are Cytoplasmic-facing. The segment covering 10–22 (QLLSTEQESMSRN) has biased composition (polar residues). Positions 23–33 (SSDSVASTAST) are enriched in low complexity. A helical; Signal-anchor for type II membrane protein transmembrane segment spans residues 110–130 (LIWIIGGVFIGAWVLALFIFL). Residues 131 to 921 (GKQAYKHSSE…VPLEIDAAKV (791 aa)) are Vacuolar-facing. The disordered stretch occupies residues 138–157 (SSESPHDPQATSSRGSGKKV). The N-linked (GlcNAc...) asparagine glycan is linked to Asn362. Ser768 serves as the catalytic Charge relay system. The N-linked (GlcNAc...) asparagine glycan is linked to Asn822. Catalysis depends on charge relay system residues Asp845 and His878.

This sequence belongs to the peptidase S9B family.

Its subcellular location is the vacuole membrane. The enzyme catalyses Release of an N-terminal dipeptide, Xaa-Yaa-|-Zaa-, from a polypeptide, preferentially when Yaa is Pro, provided Zaa is neither Pro nor hydroxyproline.. Its function is as follows. Type IV dipeptidyl-peptidase which removes N-terminal dipeptides sequentially from polypeptides having unsubstituted N-termini provided that the penultimate residue is proline. The polypeptide is Probable dipeptidyl-aminopeptidase B (dapB) (Botryotinia fuckeliana (strain B05.10) (Noble rot fungus)).